The following is a 327-amino-acid chain: Serine/threonine-protein phosphatase 4 regulatory subunit ppfr-4 (327 aa).

Residues 141–185 (KLAVEEIRRLKLERHKKKQELKMAELRIQKQLEAVSIDEQNLREL) adopt a coiled-coil conformation. The segment at 271–327 (KFGHNPQNAPQSSAPAGAEAQESEEEVDDDEARAKAMRWDEYKDDHRRGWGNMHNKG) is disordered. Residues 275–284 (NPQNAPQSSA) are compositionally biased toward polar residues. The span at 291 to 301 (QESEEEVDDDE) shows a compositional bias: acidic residues. Over residues 302-318 (ARAKAMRWDEYKDDHRR) the composition is skewed to basic and acidic residues.

Serine/threonine-protein phosphatase 4 (PP4) occurs in different assemblies of the catalytic and one or more regulatory subunits. The catalytic subunit is likely to be pph-4.1.

Functionally, probable regulatory subunit of serine/threonine-protein phosphatase PP4 which may play a role in meiosis and embryonic mitosis. Probably in association with catalytic subunit pph-4.1, regulates microtubule severing during oocyte meiosis II by dephosphorylating and likely activating mei-1, a component of the katanin microtubule severing complex. The chain is Serine/threonine-protein phosphatase 4 regulatory subunit ppfr-4 from Caenorhabditis elegans.